Reading from the N-terminus, the 313-residue chain is Malate dehydrogenase (313 aa).

Residues 8–13 and Asp-33 each bind NAD(+); that span reads GAGNVG. Residues Arg-83 and Arg-89 each contribute to the substrate site. Residues Asn-96 and 119–121 each bind NAD(+); that span reads ISN. Substrate-binding residues include Asn-121 and Arg-152. His-176 acts as the Proton acceptor in catalysis.

It belongs to the LDH/MDH superfamily. MDH type 3 family.

It catalyses the reaction (S)-malate + NAD(+) = oxaloacetate + NADH + H(+). Catalyzes the reversible oxidation of malate to oxaloacetate. The polypeptide is Malate dehydrogenase (Bacteroides fragilis (strain ATCC 25285 / DSM 2151 / CCUG 4856 / JCM 11019 / LMG 10263 / NCTC 9343 / Onslow / VPI 2553 / EN-2)).